The primary structure comprises 458 residues: Oxysterol-binding protein-related protein 3B (458 aa).

3 disordered regions span residues 47–66 (VINPEGSTDDAEEEASRGRW), 370–401 (DMSKSGYEKSSMEERQRAEKRTREEKGQAFTP), and 431–458 (RAAADNSEDNTDPKSIQFNPWQFQDLST). Basic and acidic residues predominate over residues 375–396 (GYEKSSMEERQRAEKRTREEKG). The span at 443 to 458 (PKSIQFNPWQFQDLST) shows a compositional bias: polar residues.

The protein belongs to the OSBP family. In terms of tissue distribution, expressed in roots, leaves, stems and flowers.

May be involved in the transport of sterols. In Arabidopsis thaliana (Mouse-ear cress), this protein is Oxysterol-binding protein-related protein 3B (ORP3B).